The following is a 103-amino-acid chain: Large ribosomal subunit protein uL24 (103 aa).

The protein belongs to the universal ribosomal protein uL24 family. In terms of assembly, part of the 50S ribosomal subunit.

Its function is as follows. One of two assembly initiator proteins, it binds directly to the 5'-end of the 23S rRNA, where it nucleates assembly of the 50S subunit. One of the proteins that surrounds the polypeptide exit tunnel on the outside of the subunit. In Bacillus spizizenii (strain ATCC 23059 / NRRL B-14472 / W23) (Bacillus subtilis subsp. spizizenii), this protein is Large ribosomal subunit protein uL24 (rplX).